A 95-amino-acid polypeptide reads, in one-letter code: Costars family protein At4g33640 (95 aa).

Residue Met-1 is modified to N-acetylmethionine.

Belongs to the costars family.

This Arabidopsis thaliana (Mouse-ear cress) protein is Costars family protein At4g33640.